We begin with the raw amino-acid sequence, 40 residues long: Probable non-specific lipid-transfer protein (40 aa).

It belongs to the plant LTP family. In terms of processing, phosphorylated by Ca(2+)-dependent protein kinase.

Plant non-specific lipid-transfer proteins transfer phospholipids as well as galactolipids across membranes. May play a role in wax or cutin deposition in the cell walls of expanding epidermal cells and certain secretory tissues. This chain is Probable non-specific lipid-transfer protein, found in Triticum aestivum (Wheat).